A 290-amino-acid polypeptide reads, in one-letter code: UDP-N-acetylenolpyruvoylglucosamine reductase (290 aa).

The FAD-binding PCMH-type domain occupies 20–187; it reads GVGGESEMWF…SRVRLKLRPS (168 aa). Arg167 is an active-site residue.

It belongs to the MurB family. It depends on FAD as a cofactor.

The protein resides in the cytoplasm. It catalyses the reaction UDP-N-acetyl-alpha-D-muramate + NADP(+) = UDP-N-acetyl-3-O-(1-carboxyvinyl)-alpha-D-glucosamine + NADPH + H(+). It functions in the pathway cell wall biogenesis; peptidoglycan biosynthesis. In terms of biological role, cell wall formation. The protein is UDP-N-acetylenolpyruvoylglucosamine reductase of Deinococcus radiodurans (strain ATCC 13939 / DSM 20539 / JCM 16871 / CCUG 27074 / LMG 4051 / NBRC 15346 / NCIMB 9279 / VKM B-1422 / R1).